We begin with the raw amino-acid sequence, 90 residues long: Small ribosomal subunit protein uS15 (90 aa).

This sequence belongs to the universal ribosomal protein uS15 family. In terms of assembly, part of the 30S ribosomal subunit. Forms a bridge to the 50S subunit in the 70S ribosome, contacting the 23S rRNA.

Its function is as follows. One of the primary rRNA binding proteins, it binds directly to 16S rRNA where it helps nucleate assembly of the platform of the 30S subunit by binding and bridging several RNA helices of the 16S rRNA. In terms of biological role, forms an intersubunit bridge (bridge B4) with the 23S rRNA of the 50S subunit in the ribosome. This is Small ribosomal subunit protein uS15 from Paraburkholderia xenovorans (strain LB400).